We begin with the raw amino-acid sequence, 362 residues long: Probable protein phosphatase 2C 11 (362 aa).

The PPM-type phosphatase domain occupies 23–329 (KLGLSSMQGW…DNMTMVLVQF (307 aa)). 4 residues coordinate Mn(2+): D57, G58, D272, and D320.

It belongs to the PP2C family. Mg(2+) serves as cofactor. Mn(2+) is required as a cofactor.

It catalyses the reaction O-phospho-L-seryl-[protein] + H2O = L-seryl-[protein] + phosphate. It carries out the reaction O-phospho-L-threonyl-[protein] + H2O = L-threonyl-[protein] + phosphate. The chain is Probable protein phosphatase 2C 11 from Oryza sativa subsp. japonica (Rice).